Consider the following 291-residue polypeptide: 4-hydroxy-tetrahydrodipicolinate synthase (291 aa).

A pyruvate-binding site is contributed by Thr44. Residue Tyr132 is the Proton donor/acceptor of the active site. Residue Lys160 is the Schiff-base intermediate with substrate of the active site. Residue Val202 coordinates pyruvate.

This sequence belongs to the DapA family. In terms of assembly, homotetramer; dimer of dimers.

It localises to the cytoplasm. It catalyses the reaction L-aspartate 4-semialdehyde + pyruvate = (2S,4S)-4-hydroxy-2,3,4,5-tetrahydrodipicolinate + H2O + H(+). The protein operates within amino-acid biosynthesis; L-lysine biosynthesis via DAP pathway; (S)-tetrahydrodipicolinate from L-aspartate: step 3/4. Its function is as follows. Catalyzes the condensation of (S)-aspartate-beta-semialdehyde [(S)-ASA] and pyruvate to 4-hydroxy-tetrahydrodipicolinate (HTPA). In Clostridium perfringens (strain SM101 / Type A), this protein is 4-hydroxy-tetrahydrodipicolinate synthase.